We begin with the raw amino-acid sequence, 281 residues long: Putative thiosulfate sulfurtransferase (281 aa).

Rhodanese domains follow at residues 18–125 (NTDG…ELTK) and 154–274 (AIGN…VPIE). Cys233 (cysteine persulfide intermediate) is an active-site residue. Arg238 is a substrate binding site.

It catalyses the reaction thiosulfate + hydrogen cyanide = thiocyanate + sulfite + 2 H(+). Its function is as follows. May be a sulfotransferase involved in the formation of thiosulfate. This is Putative thiosulfate sulfurtransferase (cysA) from Saccharopolyspora erythraea (Streptomyces erythraeus).